Consider the following 108-residue polypeptide: ATP synthase peripheral stalk subunit F6, mitochondrial (108 aa).

The N-terminal 32 residues, 1–32 (MTVQRIFRLSSVLRSAVSVHLRRNIGVTAVAF), are a transit peptide targeting the mitochondrion. An N6-acetyllysine mark is found at Lys-41, Lys-46, and Lys-79. Lys-84 and Lys-99 each carry N6-acetyllysine; alternate. 2 positions are modified to N6-succinyllysine; alternate: Lys-84 and Lys-99. Position 105 is an N6-acetyllysine (Lys-105). Ser-108 carries the phosphoserine modification.

Belongs to the eukaryotic ATPase subunit F6 family. As to quaternary structure, component of the ATP synthase complex composed at least of ATP5F1A/subunit alpha, ATP5F1B/subunit beta, ATP5MC1/subunit c (homooctomer), MT-ATP6/subunit a, MT-ATP8/subunit 8, ATP5ME/subunit e, ATP5MF/subunit f, ATP5MG/subunit g, ATP5MK/subunit k, ATP5MJ/subunit j, ATP5F1C/subunit gamma, ATP5F1D/subunit delta, ATP5F1E/subunit epsilon, ATP5PF/subunit F6, ATP5PB/subunit b, ATP5PD/subunit d, ATP5PO/subunit OSCP. ATP synthase complex consists of a soluble F(1) head domain (subunits alpha(3) and beta(3)) - the catalytic core - and a membrane F(0) domain - the membrane proton channel (subunits c, a, 8, e, f, g, k and j). These two domains are linked by a central stalk (subunits gamma, delta, and epsilon) rotating inside the F1 region and a stationary peripheral stalk (subunits F6, b, d, and OSCP).

It is found in the mitochondrion. The protein localises to the mitochondrion inner membrane. Functionally, subunit F6, of the mitochondrial membrane ATP synthase complex (F(1)F(0) ATP synthase or Complex V) that produces ATP from ADP in the presence of a proton gradient across the membrane which is generated by electron transport complexes of the respiratory chain. ATP synthase complex consist of a soluble F(1) head domain - the catalytic core - and a membrane F(1) domain - the membrane proton channel. These two domains are linked by a central stalk rotating inside the F(1) region and a stationary peripheral stalk. During catalysis, ATP synthesis in the catalytic domain of F(1) is coupled via a rotary mechanism of the central stalk subunits to proton translocation. In vivo, can only synthesize ATP although its ATP hydrolase activity can be activated artificially in vitro. Part of the complex F(0) domain. Part of the complex F(0) domain and the peripheric stalk, which acts as a stator to hold the catalytic alpha(3)beta(3) subcomplex and subunit a/ATP6 static relative to the rotary elements. This chain is ATP synthase peripheral stalk subunit F6, mitochondrial, found in Rattus norvegicus (Rat).